We begin with the raw amino-acid sequence, 250 residues long: uncharacterized protein (250 aa).

The N-terminal stretch at 1-25 is a signal peptide; the sequence is MKTLRTLCVLMILSGVIFFGLKIDA.

This is an uncharacterized protein from Bacillus subtilis (strain 168).